We begin with the raw amino-acid sequence, 234 residues long: ATP synthase subunit a 2 (234 aa).

The next 6 membrane-spanning stretches (helical) occupy residues 29–49 (FFQH…VGLL), 90–110 (LIAT…IPGF), 116–136 (SLNT…IVGV), 147–167 (FMGP…IGHL), 186–206 (IVLM…MMLM), and 207–227 (GILV…IYIA).

It belongs to the ATPase A chain family. In terms of assembly, F-type ATPases have 2 components, CF(1) - the catalytic core - and CF(0) - the membrane proton channel. CF(1) has five subunits: alpha(3), beta(3), gamma(1), delta(1), epsilon(1). CF(0) has three main subunits: a(1), b(2) and c(9-12). The alpha and beta chains form an alternating ring which encloses part of the gamma chain. CF(1) is attached to CF(0) by a central stalk formed by the gamma and epsilon chains, while a peripheral stalk is formed by the delta and b chains.

The protein localises to the cell inner membrane. Its function is as follows. Key component of the proton channel; it plays a direct role in the translocation of protons across the membrane. In Syntrophotalea carbinolica (strain DSM 2380 / NBRC 103641 / GraBd1) (Pelobacter carbinolicus), this protein is ATP synthase subunit a 2.